The sequence spans 226 residues: Transcriptional activator plp-1 (226 aa).

It belongs to the PUR DNA-binding protein family.

The protein resides in the nucleus. Its subcellular location is the chromosome. Probable transcription activator. Binds telomeric DNA containing repeats of the sequence, 5'-TTAGGC-3'. Binds to end-1 promoter, activating end-1 expression, which is required for endoderm specification during embryonic development. The protein is Transcriptional activator plp-1 of Caenorhabditis elegans.